Here is a 309-residue protein sequence, read N- to C-terminus: tRNA dimethylallyltransferase (309 aa).

11 to 18 (GPTASGKS) contributes to the ATP binding site. Residue 13 to 18 (TASGKS) coordinates substrate. 2 interaction with substrate tRNA regions span residues 36-39 (DSMQ) and 160-164 (QRLIR).

This sequence belongs to the IPP transferase family. In terms of assembly, monomer. The cofactor is Mg(2+).

It catalyses the reaction adenosine(37) in tRNA + dimethylallyl diphosphate = N(6)-dimethylallyladenosine(37) in tRNA + diphosphate. In terms of biological role, catalyzes the transfer of a dimethylallyl group onto the adenine at position 37 in tRNAs that read codons beginning with uridine, leading to the formation of N6-(dimethylallyl)adenosine (i(6)A). This chain is tRNA dimethylallyltransferase, found in Rickettsia felis (strain ATCC VR-1525 / URRWXCal2) (Rickettsia azadi).